Consider the following 460-residue polypeptide: Allantoinase (460 aa).

His70, His72, Lys157, His193, His250, and Asp323 together coordinate Zn(2+). Lys157 carries the N6-carboxylysine modification.

The protein belongs to the metallo-dependent hydrolases superfamily. Allantoinase family. Homotetramer. It depends on Zn(2+) as a cofactor. Carboxylation allows a single lysine to coordinate two zinc ions.

The enzyme catalyses (S)-allantoin + H2O = allantoate + H(+). Its pathway is nitrogen metabolism; (S)-allantoin degradation; allantoate from (S)-allantoin: step 1/1. Functionally, catalyzes the conversion of allantoin (5-ureidohydantoin) to allantoic acid by hydrolytic cleavage of the five-member hydantoin ring. Involved in the utilization of purines as secondary nitrogen sources, when primary sources are limiting. This Saccharomyces cerevisiae (strain ATCC 204508 / S288c) (Baker's yeast) protein is Allantoinase (DAL1).